The chain runs to 231 residues: 7-cyano-7-deazaguanine synthase (231 aa).

Residue 8-18 coordinates ATP; sequence FSGGQDSTTCL. Zn(2+) contacts are provided by Cys187, Cys196, Cys199, and Cys202.

The protein belongs to the QueC family. It depends on Zn(2+) as a cofactor.

The catalysed reaction is 7-carboxy-7-deazaguanine + NH4(+) + ATP = 7-cyano-7-deazaguanine + ADP + phosphate + H2O + H(+). It functions in the pathway purine metabolism; 7-cyano-7-deazaguanine biosynthesis. Catalyzes the ATP-dependent conversion of 7-carboxy-7-deazaguanine (CDG) to 7-cyano-7-deazaguanine (preQ(0)). This chain is 7-cyano-7-deazaguanine synthase, found in Vibrio vulnificus (strain CMCP6).